Here is an 823-residue protein sequence, read N- to C-terminus: Spindle pole body component SPC97 (823 aa).

It belongs to the TUBGCP family. In terms of assembly, interacts with TUB4, SPC72 and SPC98.

The protein localises to the nucleus. It localises to the cytoplasm. Its subcellular location is the cytoskeleton. It is found in the microtubule organizing center. The protein resides in the spindle pole body. Functionally, involved in microtubule organization by the microtubule organizing center, the spindle pole body (SPB). Probably part of the microtubule attachment site at the SPB. This is Spindle pole body component SPC97 (SPC97) from Saccharomyces cerevisiae (strain ATCC 204508 / S288c) (Baker's yeast).